The chain runs to 224 residues: Ribosomal RNA small subunit methyltransferase G (224 aa).

S-adenosyl-L-methionine-binding positions include G92, L97, 143–144 (VE), and R156.

This sequence belongs to the methyltransferase superfamily. RNA methyltransferase RsmG family.

Its subcellular location is the cytoplasm. The enzyme catalyses guanosine(527) in 16S rRNA + S-adenosyl-L-methionine = N(7)-methylguanosine(527) in 16S rRNA + S-adenosyl-L-homocysteine. Specifically methylates the N7 position of guanine in position 527 of 16S rRNA. In Albidiferax ferrireducens (strain ATCC BAA-621 / DSM 15236 / T118) (Rhodoferax ferrireducens), this protein is Ribosomal RNA small subunit methyltransferase G.